We begin with the raw amino-acid sequence, 194 residues long: Lipoprotein signal peptidase (194 aa).

A run of 2 helical transmembrane segments spans residues 75-95 (TIFL…MICS) and 97-117 (TIGS…NLID). Active-site residues include D126 and D144. Residues 135–155 (YSFPVFNLADCFITLGVIILM) traverse the membrane as a helical segment.

Belongs to the peptidase A8 family.

It is found in the cell inner membrane. The enzyme catalyses Release of signal peptides from bacterial membrane prolipoproteins. Hydrolyzes -Xaa-Yaa-Zaa-|-(S,diacylglyceryl)Cys-, in which Xaa is hydrophobic (preferably Leu), and Yaa (Ala or Ser) and Zaa (Gly or Ala) have small, neutral side chains.. It participates in protein modification; lipoprotein biosynthesis (signal peptide cleavage). This protein specifically catalyzes the removal of signal peptides from prolipoproteins. The protein is Lipoprotein signal peptidase of Rickettsia prowazekii (strain Madrid E).